The sequence spans 174 residues: Adenylate kinase (174 aa).

The interval 12–41 (STGDMLRAAIKAGTLLGLEAKKIIDEGGLV) is NMP. AMP is bound by residues Thr-13, Arg-18, 39-41 (GLV), 67-70 (GFPR), and Gln-74. Residues 104–141 (GRRVHLASGRTYHVTYNPPKVEGKDDVTGEDLIQRDDD) are LID. ATP-binding positions include Arg-105 and 114–115 (TY). AMP-binding residues include Arg-138 and Arg-149.

The protein belongs to the adenylate kinase family. Monomer.

It localises to the cytoplasm. It carries out the reaction AMP + ATP = 2 ADP. The protein operates within purine metabolism; AMP biosynthesis via salvage pathway; AMP from ADP: step 1/1. In terms of biological role, catalyzes the reversible transfer of the terminal phosphate group between ATP and AMP. Plays an important role in cellular energy homeostasis and in adenine nucleotide metabolism. In Neisseria polysaccharea, this protein is Adenylate kinase.